A 261-amino-acid chain; its full sequence is Ribosomal RNA small subunit methyltransferase J (261 aa).

S-adenosyl-L-methionine contacts are provided by residues 111–112, 127–128, 163–164, and Asp181; these read RD, ER, and SS.

Belongs to the methyltransferase superfamily. RsmJ family.

Its subcellular location is the cytoplasm. It catalyses the reaction guanosine(1516) in 16S rRNA + S-adenosyl-L-methionine = N(2)-methylguanosine(1516) in 16S rRNA + S-adenosyl-L-homocysteine + H(+). Functionally, specifically methylates the guanosine in position 1516 of 16S rRNA. The chain is Ribosomal RNA small subunit methyltransferase J from Shewanella sp. (strain MR-7).